The chain runs to 311 residues: Dermonecrotic toxin (311 aa).

The signal sequence occupies residues 1-21 (MYVHLALILGCWTVVLQGAET). A propeptide spanning residues 22 to 26 (DVGER) is cleaved from the precursor. His38 is an active-site residue. Mg(2+) is bound by residues Glu58 and Asp60. The active-site Nucleophile is His73. The cysteines at positions 77 and 83 are disulfide-linked. Residue Asp117 participates in Mg(2+) binding.

Belongs to the arthropod phospholipase D family. Class I subfamily. Mg(2+) serves as cofactor. In terms of tissue distribution, expressed by the venom gland.

It localises to the secreted. The enzyme catalyses an N-(acyl)-sphingosylphosphocholine = an N-(acyl)-sphingosyl-1,3-cyclic phosphate + choline. It catalyses the reaction an N-(acyl)-sphingosylphosphoethanolamine = an N-(acyl)-sphingosyl-1,3-cyclic phosphate + ethanolamine. The catalysed reaction is a 1-acyl-sn-glycero-3-phosphocholine = a 1-acyl-sn-glycero-2,3-cyclic phosphate + choline. It carries out the reaction a 1-acyl-sn-glycero-3-phosphoethanolamine = a 1-acyl-sn-glycero-2,3-cyclic phosphate + ethanolamine. With respect to regulation, catalytic activity and hemolysis are inhibited by divalent ion chelators (1,10-phenanthroline, EDTA, and EGTA). Functionally, dermonecrotic toxins cleave the phosphodiester linkage between the phosphate and headgroup of certain phospholipids (sphingolipid and lysolipid substrates), forming an alcohol (often choline) and a cyclic phosphate. This toxin acts on sphingomyelin (SM). It may also act on ceramide phosphoethanolamine (CPE), lysophosphatidylcholine (LPC) and lysophosphatidylethanolamine (LPE), but not on lysophosphatidylserine (LPS), and lysophosphatidylglycerol (LPG). It acts by transphosphatidylation, releasing exclusively cyclic phosphate products as second products. Shows complement-dependent hemolysis. Also induces dermonecrosis, vascular permeability, edema, inflammatory response, and platelet aggregation. The sequence is that of Dermonecrotic toxin from Loxosceles laeta (South American recluse spider).